The primary structure comprises 374 residues: Putative glutamate--cysteine ligase 2 (374 aa).

The protein belongs to the glutamate--cysteine ligase type 2 family. YbdK subfamily.

The catalysed reaction is L-cysteine + L-glutamate + ATP = gamma-L-glutamyl-L-cysteine + ADP + phosphate + H(+). Functionally, ATP-dependent carboxylate-amine ligase which exhibits weak glutamate--cysteine ligase activity. This Acidovorax ebreus (strain TPSY) (Diaphorobacter sp. (strain TPSY)) protein is Putative glutamate--cysteine ligase 2.